We begin with the raw amino-acid sequence, 255 residues long: Epoxyqueuosine reductase QueH (255 aa).

Cys44, Cys45, Cys128, and Cys131 together coordinate [4Fe-4S] cluster. Residues Cys210 and Cys212 are joined by a disulfide bond.

This sequence belongs to the QueH family.

The catalysed reaction is epoxyqueuosine(34) in tRNA + AH2 = queuosine(34) in tRNA + A + H2O. It participates in tRNA modification; tRNA-queuosine biosynthesis. Its function is as follows. Catalyzes the conversion of epoxyqueuosine (oQ) to queuosine (Q), which is a hypermodified base found in the wobble positions of tRNA(Asp), tRNA(Asn), tRNA(His) and tRNA(Tyr). This Streptococcus pyogenes serotype M1 protein is Epoxyqueuosine reductase QueH.